Here is a 429-residue protein sequence, read N- to C-terminus: 3-phosphoshikimate 1-carboxyvinyltransferase (429 aa).

3-phosphoshikimate contacts are provided by Lys23, Ser24, and Arg28. A phosphoenolpyruvate-binding site is contributed by Lys23. Residues Gly95 and Arg123 each coordinate phosphoenolpyruvate. The 3-phosphoshikimate site is built by Ser168, Gln170, Asp316, and Lys343. Position 170 (Gln170) interacts with phosphoenolpyruvate. Asp316 (proton acceptor) is an active-site residue. The phosphoenolpyruvate site is built by Arg347 and Arg389.

The protein belongs to the EPSP synthase family. Monomer.

The protein localises to the cytoplasm. The enzyme catalyses 3-phosphoshikimate + phosphoenolpyruvate = 5-O-(1-carboxyvinyl)-3-phosphoshikimate + phosphate. It functions in the pathway metabolic intermediate biosynthesis; chorismate biosynthesis; chorismate from D-erythrose 4-phosphate and phosphoenolpyruvate: step 6/7. Functionally, catalyzes the transfer of the enolpyruvyl moiety of phosphoenolpyruvate (PEP) to the 5-hydroxyl of shikimate-3-phosphate (S3P) to produce enolpyruvyl shikimate-3-phosphate and inorganic phosphate. This is 3-phosphoshikimate 1-carboxyvinyltransferase from Bacillus cereus (strain ZK / E33L).